We begin with the raw amino-acid sequence, 417 residues long: Serine hydroxymethyltransferase (417 aa).

Residues leucine 121 and 125 to 127 (GHL) contribute to the (6S)-5,6,7,8-tetrahydrofolate site. An N6-(pyridoxal phosphate)lysine modification is found at lysine 229. Residue 355 to 357 (SPF) participates in (6S)-5,6,7,8-tetrahydrofolate binding.

This sequence belongs to the SHMT family. As to quaternary structure, homodimer. The cofactor is pyridoxal 5'-phosphate.

The protein localises to the cytoplasm. It carries out the reaction (6R)-5,10-methylene-5,6,7,8-tetrahydrofolate + glycine + H2O = (6S)-5,6,7,8-tetrahydrofolate + L-serine. It participates in one-carbon metabolism; tetrahydrofolate interconversion. It functions in the pathway amino-acid biosynthesis; glycine biosynthesis; glycine from L-serine: step 1/1. Its function is as follows. Catalyzes the reversible interconversion of serine and glycine with tetrahydrofolate (THF) serving as the one-carbon carrier. This reaction serves as the major source of one-carbon groups required for the biosynthesis of purines, thymidylate, methionine, and other important biomolecules. Also exhibits THF-independent aldolase activity toward beta-hydroxyamino acids, producing glycine and aldehydes, via a retro-aldol mechanism. The chain is Serine hydroxymethyltransferase from Aeromonas hydrophila subsp. hydrophila (strain ATCC 7966 / DSM 30187 / BCRC 13018 / CCUG 14551 / JCM 1027 / KCTC 2358 / NCIMB 9240 / NCTC 8049).